The following is a 31-amino-acid chain: Putative translational regulatory protein ArgL (31 aa).

May serve a regulatory role in expression of downstream gene argF; in an argL-argF-lacZ fusion mutation of the start codon to a stop codon in argL increases expression of beta-galactosidase. In Escherichia coli (strain K12), this protein is Putative translational regulatory protein ArgL.